A 237-amino-acid polypeptide reads, in one-letter code: GrpE protein homolog, mitochondrial (237 aa).

Belongs to the GrpE family. Probable component of the PAM complex at least composed of a mitochondrial HSP70 protein, GrpE, tim-44, tim-16 and tim-14/dnj-21.

Its subcellular location is the mitochondrion matrix. Its function is as follows. Essential component of the PAM complex, a complex required for the translocation of transit peptide-containing proteins from the inner membrane into the mitochondrial matrix in an ATP-dependent manner. Seems to control the nucleotide-dependent binding of mitochondrial HSP70 to substrate proteins. This is GrpE protein homolog, mitochondrial from Caenorhabditis elegans.